The sequence spans 345 residues: Holliday junction branch migration complex subunit RuvB (345 aa).

Residues 4–194 form a large ATPase domain (RuvB-L) region; the sequence is TDKLFGAAPE…FGIVARLEFY (191 aa). ATP is bound by residues L33, R34, G75, K78, T79, T80, 141–143, R184, Y194, and R231; that span reads EDY. Residue T79 participates in Mg(2+) binding. The segment at 195 to 265 is small ATPAse domain (RuvB-S); the sequence is NAEELTRIVS…VADAALAMLD (71 aa). Residues 268–345 form a head domain (RuvB-H) region; it reads PAGLDVMDRK…LHFGLPVKDA (78 aa). Residues R323 and R328 each coordinate DNA.

Belongs to the RuvB family. As to quaternary structure, homohexamer. Forms an RuvA(8)-RuvB(12)-Holliday junction (HJ) complex. HJ DNA is sandwiched between 2 RuvA tetramers; dsDNA enters through RuvA and exits via RuvB. An RuvB hexamer assembles on each DNA strand where it exits the tetramer. Each RuvB hexamer is contacted by two RuvA subunits (via domain III) on 2 adjacent RuvB subunits; this complex drives branch migration. In the full resolvosome a probable DNA-RuvA(4)-RuvB(12)-RuvC(2) complex forms which resolves the HJ.

Its subcellular location is the cytoplasm. The catalysed reaction is ATP + H2O = ADP + phosphate + H(+). Functionally, the RuvA-RuvB-RuvC complex processes Holliday junction (HJ) DNA during genetic recombination and DNA repair, while the RuvA-RuvB complex plays an important role in the rescue of blocked DNA replication forks via replication fork reversal (RFR). RuvA specifically binds to HJ cruciform DNA, conferring on it an open structure. The RuvB hexamer acts as an ATP-dependent pump, pulling dsDNA into and through the RuvAB complex. RuvB forms 2 homohexamers on either side of HJ DNA bound by 1 or 2 RuvA tetramers; 4 subunits per hexamer contact DNA at a time. Coordinated motions by a converter formed by DNA-disengaged RuvB subunits stimulates ATP hydrolysis and nucleotide exchange. Immobilization of the converter enables RuvB to convert the ATP-contained energy into a lever motion, pulling 2 nucleotides of DNA out of the RuvA tetramer per ATP hydrolyzed, thus driving DNA branch migration. The RuvB motors rotate together with the DNA substrate, which together with the progressing nucleotide cycle form the mechanistic basis for DNA recombination by continuous HJ branch migration. Branch migration allows RuvC to scan DNA until it finds its consensus sequence, where it cleaves and resolves cruciform DNA. This Chromobacterium violaceum (strain ATCC 12472 / DSM 30191 / JCM 1249 / CCUG 213 / NBRC 12614 / NCIMB 9131 / NCTC 9757 / MK) protein is Holliday junction branch migration complex subunit RuvB.